Reading from the N-terminus, the 511-residue chain is Chromosomal replication initiator protein DnaA (511 aa).

Positions 1–90 are domain I, interacts with DnaA modulators; that stretch reads MSVELWQQCV…RRSSAPRAAP (90 aa). Positions 91–174 are domain II; it reads NAPVSAAMAA…QVEGALKHTS (84 aa). The segment at 125–161 is disordered; it reads TAEPAQASDMAEASSRDSYDSMADSAPAPVAPGRTEQ. The tract at residues 175 to 391 is domain III, AAA+ region; the sequence is YLNRTFTFET…GALKRVIAHS (217 aa). The ATP site is built by glycine 219, glycine 221, lysine 222, and threonine 223. Positions 392–511 are domain IV, binds dsDNA; sequence HFMGRDITIE…YKNLLRTLTT (120 aa).

Belongs to the DnaA family. Oligomerizes as a right-handed, spiral filament on DNA at oriC.

It is found in the cytoplasm. Plays an essential role in the initiation and regulation of chromosomal replication. ATP-DnaA binds to the origin of replication (oriC) to initiate formation of the DNA replication initiation complex once per cell cycle. Binds the DnaA box (a 9 base pair repeat at the origin) and separates the double-stranded (ds)DNA. Forms a right-handed helical filament on oriC DNA; dsDNA binds to the exterior of the filament while single-stranded (ss)DNA is stabiized in the filament's interior. The ATP-DnaA-oriC complex binds and stabilizes one strand of the AT-rich DNA unwinding element (DUE), permitting loading of DNA polymerase. After initiation quickly degrades to an ADP-DnaA complex that is not apt for DNA replication. Binds acidic phospholipids. The chain is Chromosomal replication initiator protein DnaA from Pseudomonas putida (strain W619).